The primary structure comprises 328 residues: Probable D,D-dipeptide transport ATP-binding protein DdpD (328 aa).

The ABC transporter domain maps to 6 to 257; it reads LDIQQLHLSF…PRHPYTIGLL (252 aa). Residue 42-49 coordinates ATP; it reads GESGSGKS.

Belongs to the ABC transporter superfamily. The complex is composed of two ATP-binding proteins (DdpD and DdpF), two transmembrane proteins (DdpB and DdpC) and a solute-binding protein (DdpA).

The protein resides in the cell inner membrane. Its function is as follows. Part of the ABC transporter complex DdpABCDF, which is probably involved in D,D-dipeptide transport. Probably responsible for energy coupling to the transport system. The sequence is that of Probable D,D-dipeptide transport ATP-binding protein DdpD from Escherichia coli (strain K12).